Here is a 160-residue protein sequence, read N- to C-terminus: uncharacterized protein (160 aa).

This is an uncharacterized protein from Methanocaldococcus jannaschii (strain ATCC 43067 / DSM 2661 / JAL-1 / JCM 10045 / NBRC 100440) (Methanococcus jannaschii).